The chain runs to 449 residues: Methylenetetrahydrofolate--tRNA-(uracil-5-)-methyltransferase TrmFO (449 aa).

9 to 14 is an FAD binding site; that stretch reads GGGMAG.

It belongs to the MnmG family. TrmFO subfamily. It depends on FAD as a cofactor.

Its subcellular location is the cytoplasm. It catalyses the reaction uridine(54) in tRNA + (6R)-5,10-methylene-5,6,7,8-tetrahydrofolate + NADH + H(+) = 5-methyluridine(54) in tRNA + (6S)-5,6,7,8-tetrahydrofolate + NAD(+). The catalysed reaction is uridine(54) in tRNA + (6R)-5,10-methylene-5,6,7,8-tetrahydrofolate + NADPH + H(+) = 5-methyluridine(54) in tRNA + (6S)-5,6,7,8-tetrahydrofolate + NADP(+). Functionally, catalyzes the folate-dependent formation of 5-methyl-uridine at position 54 (M-5-U54) in all tRNAs. The polypeptide is Methylenetetrahydrofolate--tRNA-(uracil-5-)-methyltransferase TrmFO (Ruegeria pomeroyi (strain ATCC 700808 / DSM 15171 / DSS-3) (Silicibacter pomeroyi)).